Reading from the N-terminus, the 247-residue chain is Isoprenyl transferase (247 aa).

The active site involves aspartate 18. Aspartate 18 lines the Mg(2+) pocket. Residues 19–22 (GNGR), tryptophan 23, arginine 31, histidine 35, and 63–65 (SSE) contribute to the substrate site. Asparagine 66 acts as the Proton acceptor in catalysis. Substrate contacts are provided by residues tryptophan 67, arginine 69, arginine 186, and 192-194 (RLS). Glutamate 205 serves as a coordination point for Mg(2+).

The protein belongs to the UPP synthase family. In terms of assembly, homodimer. Mg(2+) is required as a cofactor.

Functionally, catalyzes the condensation of isopentenyl diphosphate (IPP) with allylic pyrophosphates generating different type of terpenoids. The chain is Isoprenyl transferase from Agrobacterium fabrum (strain C58 / ATCC 33970) (Agrobacterium tumefaciens (strain C58)).